The following is a 2314-amino-acid chain: A-kinase anchor protein 6 (2314 aa).

Positions 1–12 are enriched in polar residues; that stretch reads MLTMSVTLSPLR. Disordered regions lie at residues 1–25, 285–432, 505–613, and 736–755; these read MLTM…DASP, PSSC…DPPD, SLCR…PCHA, and TDEK…HSAT. The span at 301–311 shows a compositional bias: basic and acidic residues; it reads SDDHKGEHGED. Positions 319 to 330 are enriched in polar residues; that stretch reads QLDSTVGMSSLD. Positions 398–420 are enriched in basic and acidic residues; that stretch reads ETQKNERKGSDRKGQVVDLKPEL. A compositionally biased stretch (low complexity) spans 569-592; sequence SKASSSPPCSHSSESSLGSDSIKS. Positions 736-753 are enriched in basic and acidic residues; it reads TDEKSERPSSSEKNESHS. Spectrin repeat units lie at residues 768–847 and 1033–1148; these read QHQE…QLLE and ILEK…LLDD. A Phosphoserine modification is found at Ser-1072. Residues 1349 to 1401 form a disordered region; it reads CHSGDLSQNSGSESGIVSEGDNEMPTNSDMSLFSMVDGSPSNPETEHPDPQMG. Positions 1353-1363 are enriched in polar residues; sequence DLSQNSGSESG. A phosphoserine mark is found at Ser-1568 and Ser-1593. Basic and acidic residues-rich tracts occupy residues 1816–1831 and 1874–1891; these read RSGV…DGGG and GENK…HVAD. Disordered regions lie at residues 1816-1838, 1854-1926, and 1940-2012; these read RSGV…ANPS, LSEN…KTIS, and SEDS…SGAR. A compositionally biased stretch (polar residues) spans 1917–1926; it reads NLASNVKTIS. A compositionally biased stretch (basic and acidic residues) spans 1944 to 1958; the sequence is SVARKEFCPPNDRHP. The segment at 2062–2075 is PKA-RII subunit binding domain; that stretch reads IIDMASTALKSKSQ. Residues 2166 to 2286 form a disordered region; it reads EEAGLPGALP…NAKQPKGKVA (121 aa). Over residues 2215–2226 the composition is skewed to basic and acidic residues; the sequence is GADDAKEGDDVS. A compositionally biased stretch (polar residues) spans 2227–2243; that stretch reads HTSQGCAESTEPTTPSG.

As to quaternary structure, interacts with RII subunit of PKA, phosphatase 2B (calcineurin) and AKAP79. Interacts with SYNPO2.

Its subcellular location is the sarcoplasmic reticulum. It is found in the nucleus membrane. In terms of biological role, binds to type II regulatory subunits of protein kinase A and anchors/targets them to the nuclear membrane or sarcoplasmic reticulum. May act as an adapter for assembling multiprotein complexes. The sequence is that of A-kinase anchor protein 6 (Akap6) from Rattus norvegicus (Rat).